The following is a 151-amino-acid chain: Probable ubiquitin-conjugating enzyme E2 W-A (151 aa).

Residues 3 to 151 (SMQKRLQKEL…TKWWYHDDTC (149 aa)) form the UBC core domain. Cys91 functions as the Glycyl thioester intermediate in the catalytic mechanism.

The protein belongs to the ubiquitin-conjugating enzyme family.

The protein resides in the nucleus. It carries out the reaction S-ubiquitinyl-[E1 ubiquitin-activating enzyme]-L-cysteine + [E2 ubiquitin-conjugating enzyme]-L-cysteine = [E1 ubiquitin-activating enzyme]-L-cysteine + S-ubiquitinyl-[E2 ubiquitin-conjugating enzyme]-L-cysteine.. It catalyses the reaction S-ubiquitinyl-[E1 ubiquitin-activating enzyme]-L-cysteine + [acceptor protein]-N-terminal-amino acid = [E1 ubiquitin-activating enzyme]-L-cysteine + N-terminal-ubiquitinyl-[acceptor protein].. Its pathway is protein modification; protein ubiquitination. In terms of biological role, accepts ubiquitin from the E1 complex and catalyzes its covalent attachment to other proteins. Catalyzes monoubiquitination. Involved in degradation of misfolded chaperone substrate and DNA repair. The chain is Probable ubiquitin-conjugating enzyme E2 W-A (ube2wa) from Danio rerio (Zebrafish).